The chain runs to 753 residues: MNPSGTIGVLEQNGEEHLATPILGPSVHSDNPQERIQARRLRIAARQEARRREALGEYLDGKKESEEEQSKSYKQKEESRLKLTKLLLCGTELVTNIQVAADVREIHRRVEEEETKRQRLEKLENEVKTSQDKFDEITAKWEEGRRKRIPQELWEMLNSQQVHCAELIEDKNKLANELQQELKIKDDQYVKDLKKQSEDITLILERMEEQVKNVMKNFRQELIHIEKAFESERQELLSSNKKKWERALQAHNAKELEYLTNRMKKVEDYEKQLNKQRVWDCEEYNTIKIKLEQDVQILEQQLQQMKATYQLNQEKLEYNFQVLKKRDEESTVIKSQQKRKLNRLHDVVNNLRTKYTKQIRQFQDDNQSLTSDYKRLVTQFKDLQKALRHFIIIDEEKFREIWLMNEAEAKELAQRAFDVDRIIHSQHLGLPWNMPDLWFLNNVGPISLQQQKSVTQILEELLLQTEDEATEAAMSEDEDYMDLPNQISAKTTTKVLMLLCDESGFLIESKLLSLLHPLEKSECYLLRLDAIFSALAIEDEDDLYKLVNFFLRYRAHRLSSAQASSSIHSNVERTSLMSALERLSLMSQTDKGSMVSKSDQEPTEQEDEQEGDNASLSSRELEEQEDLSSPRFIHPNDVLKILEAFVTGLKKPKDAQPVLKLKKETRDNSKDTEYWESLAAVIPFFKQNLWDALYKALEKYYLVLTERAKLLMENESLEQQNAEMQSLLQQYLQAKVNTELQIPPTQGFRMPSK.

Disordered stretches follow at residues Met1 to Gln33 and Leu55 to Lys76. A coiled-coil region spans residues Ala100 to Arg388. Over residues Ser587 to Lys597 the composition is skewed to polar residues. Residues Ser587 to Ser628 form a disordered region. Residues Glu601–Gly611 show a composition bias toward acidic residues. A coiled-coil region spans residues Val703–Glu739.

It belongs to the DRC1 family. Component of the nexin-dynein regulatory complex (N-DRC). Interacts with CCDC65/DRC2, DRC3, GAS8/DRC4 and TCTE1/DRC5.

It localises to the cytoplasm. Its subcellular location is the cytoskeleton. It is found in the cilium axoneme. The protein localises to the flagellum axoneme. Component of the nexin-dynein regulatory complex (N-DRC) a key regulator of ciliary/flagellar motility which maintains the alignment and integrity of the distal axoneme and regulates microtubule sliding in motile axonemes. Plays a critical role in the assembly of N-DRC and also stabilizes the assembly of multiple inner dynein arms and radial spokes. Coassembles with CCDC65/DRC2 to form a central scaffold needed for assembly of the N-DRC and its attachment to the outer doublet microtubules. In Mus musculus (Mouse), this protein is Dynein regulatory complex protein 1 (Drc1).